Here is a 320-residue protein sequence, read N- to C-terminus: Putative cyclin-D7-1 (320 aa).

Positions 1–46 (MDDDDDTSFNNSLDLYCDEDPFDSTPPPPPPPPEQQQQAGTTTPDD) are disordered. Residues 24–34 (STPPPPPPPPE) show a composition bias toward pro residues. The span at 35–44 (QQQQAGTTTP) shows a compositional bias: low complexity.

This sequence belongs to the cyclin family. Cyclin D subfamily.

This Oryza sativa subsp. japonica (Rice) protein is Putative cyclin-D7-1 (CYCD7-1).